The sequence spans 122 residues: Proteasome assembly chaperone 3 (122 aa).

The residue at position 1 (methionine 1) is an N-acetylmethionine.

It belongs to the PSMG3 family. In terms of assembly, homodimer. Interacts with PSMG4. Interacts directly with alpha and beta subunits of the 20S proteasome but dissociates before the formation of half-proteasomes, probably upon recruitment of POMP.

In terms of biological role, chaperone protein which promotes assembly of the 20S proteasome. May cooperate with PSMG1-PSMG2 heterodimers to orchestrate the correct assembly of proteasomes. The chain is Proteasome assembly chaperone 3 from Homo sapiens (Human).